Consider the following 838-residue polypeptide: Periplasmic nitrate reductase (838 aa).

A signal peptide (tat-type signal) is located at residues 1–29 (MDMSRRTLLKAQAAAAAAAVAGIDLPAEA). Positions 40–96 (LKWSKAPCRFCGTGCGVMVGVKDGRVVATHGDMQAEVNRGLNCVKGYFLSKIMYGAD) constitute a 4Fe-4S Mo/W bis-MGD-type domain. Positions 47, 50, 54, and 82 each coordinate [4Fe-4S] cluster. Mo-bis(molybdopterin guanine dinucleotide) is bound by residues K84, Q151, N176, C180, 213–220 (WGSNMAEM), 244–248 (STYEH), 263–265 (GTD), M374, Q378, N484, 510–511 (SD), K533, D560, and 720–729 (TGRVLEHWHS). Position 796 (F796) interacts with substrate. N804 and K821 together coordinate Mo-bis(molybdopterin guanine dinucleotide).

It belongs to the prokaryotic molybdopterin-containing oxidoreductase family. NasA/NapA/NarB subfamily. In terms of assembly, component of the periplasmic nitrate reductase NapAB complex composed of NapA and NapB. The cofactor is [4Fe-4S] cluster. Mo-bis(molybdopterin guanine dinucleotide) serves as cofactor. Post-translationally, predicted to be exported by the Tat system. The position of the signal peptide cleavage has not been experimentally proven.

The protein resides in the periplasm. The enzyme catalyses 2 Fe(II)-[cytochrome] + nitrate + 2 H(+) = 2 Fe(III)-[cytochrome] + nitrite + H2O. In terms of biological role, catalytic subunit of the periplasmic nitrate reductase complex NapAB. Receives electrons from NapB and catalyzes the reduction of nitrate to nitrite. The polypeptide is Periplasmic nitrate reductase (Methylobacterium sp. (strain 4-46)).